The chain runs to 219 residues: Urease subunit gamma/beta (219 aa).

Residues 1 to 101 (MFLTPREQEK…LVTVRNPIKS (101 aa)) form a urease gamma region. Residues 102 to 219 (SKKTLNTYII…IKRAKERGFA (118 aa)) form a urease beta region.

In the N-terminal section; belongs to the urease gamma subunit family. This sequence in the C-terminal section; belongs to the urease beta subunit family. In terms of assembly, heterohexamer of 3 UreC (alpha) and 3 UreAB (gamma/beta) subunits.

Its subcellular location is the cytoplasm. The catalysed reaction is urea + 2 H2O + H(+) = hydrogencarbonate + 2 NH4(+). It participates in nitrogen metabolism; urea degradation; CO(2) and NH(3) from urea (urease route): step 1/1. The sequence is that of Urease subunit gamma/beta from Sulfurisphaera tokodaii (strain DSM 16993 / JCM 10545 / NBRC 100140 / 7) (Sulfolobus tokodaii).